The sequence spans 1066 residues: Isoleucine--tRNA ligase (1066 aa).

The 'HIGH' region motif lies at 49–59 (PYVSGAIHLGT). The 'KMSKS' region motif lies at 625–629 (KMSKS). Lysine 628 is an ATP binding site.

The protein belongs to the class-I aminoacyl-tRNA synthetase family. IleS type 2 subfamily. In terms of assembly, monomer. Zn(2+) is required as a cofactor.

It is found in the cytoplasm. It catalyses the reaction tRNA(Ile) + L-isoleucine + ATP = L-isoleucyl-tRNA(Ile) + AMP + diphosphate. Functionally, catalyzes the attachment of isoleucine to tRNA(Ile). As IleRS can inadvertently accommodate and process structurally similar amino acids such as valine, to avoid such errors it has two additional distinct tRNA(Ile)-dependent editing activities. One activity is designated as 'pretransfer' editing and involves the hydrolysis of activated Val-AMP. The other activity is designated 'posttransfer' editing and involves deacylation of mischarged Val-tRNA(Ile). This is Isoleucine--tRNA ligase from Pyrococcus horikoshii (strain ATCC 700860 / DSM 12428 / JCM 9974 / NBRC 100139 / OT-3).